Here is a 429-residue protein sequence, read N- to C-terminus: Glutamate-1-semialdehyde 2,1-aminomutase (429 aa).

N6-(pyridoxal phosphate)lysine is present on lysine 265.

It belongs to the class-III pyridoxal-phosphate-dependent aminotransferase family. HemL subfamily. Homodimer. It depends on pyridoxal 5'-phosphate as a cofactor.

The protein localises to the cytoplasm. The catalysed reaction is (S)-4-amino-5-oxopentanoate = 5-aminolevulinate. The protein operates within porphyrin-containing compound metabolism; protoporphyrin-IX biosynthesis; 5-aminolevulinate from L-glutamyl-tRNA(Glu): step 2/2. The polypeptide is Glutamate-1-semialdehyde 2,1-aminomutase (Chromohalobacter salexigens (strain ATCC BAA-138 / DSM 3043 / CIP 106854 / NCIMB 13768 / 1H11)).